We begin with the raw amino-acid sequence, 233 residues long: MKHNLNAHEARVIGCLLEKQVTTPEQYPMSLNGLTLACNQKTSRDPVMELSESQVQQTLDFLLKKHLIRSQSGNRVMKYEHRFCNSEFGDLKFSPAEVAVITLLLLRGAQTPGELRTRTNRMYEFADVAETEETLKTLSLREDGPFVVRLAREPGKRESRFMPLFSGDVASSLLAAGEAEENNHTLEANPRETHSFENIALEKTALEARVAQLEQQVIQLSRRLDDVLIQLDD.

The protein belongs to the UPF0502 family.

In Yersinia pseudotuberculosis serotype O:1b (strain IP 31758), this protein is UPF0502 protein YpsIP31758_2048.